The following is an 825-amino-acid chain: Probable inorganic carbon transporter subunit DabA (825 aa).

The Zn(2+) site is built by Cys-334, Asp-336, His-521, and Cys-536.

The protein belongs to the inorganic carbon transporter (TC 9.A.2) DabA family. Forms a complex with DabB. Zn(2+) serves as cofactor.

It is found in the cell inner membrane. Functionally, part of an energy-coupled inorganic carbon pump. This is Probable inorganic carbon transporter subunit DabA from Acidithiobacillus ferrooxidans (strain ATCC 23270 / DSM 14882 / CIP 104768 / NCIMB 8455) (Ferrobacillus ferrooxidans (strain ATCC 23270)).